The primary structure comprises 408 residues: Imidazolonepropionase (408 aa).

Fe(3+)-binding residues include H73 and H75. The Zn(2+) site is built by H73 and H75. R82, Y145, and H178 together coordinate 4-imidazolone-5-propanoate. Y145 serves as a coordination point for N-formimidoyl-L-glutamate. A Fe(3+)-binding site is contributed by H243. A Zn(2+)-binding site is contributed by H243. Q246 contacts 4-imidazolone-5-propanoate. D318 provides a ligand contact to Fe(3+). Residue D318 coordinates Zn(2+). Positions 320 and 322 each coordinate N-formimidoyl-L-glutamate. 4-imidazolone-5-propanoate is bound at residue S323.

It belongs to the metallo-dependent hydrolases superfamily. HutI family. It depends on Zn(2+) as a cofactor. Fe(3+) is required as a cofactor.

Its subcellular location is the cytoplasm. It catalyses the reaction 4-imidazolone-5-propanoate + H2O = N-formimidoyl-L-glutamate. It functions in the pathway amino-acid degradation; L-histidine degradation into L-glutamate; N-formimidoyl-L-glutamate from L-histidine: step 3/3. Catalyzes the hydrolytic cleavage of the carbon-nitrogen bond in imidazolone-5-propanoate to yield N-formimidoyl-L-glutamate. It is the third step in the universal histidine degradation pathway. In Shewanella sediminis (strain HAW-EB3), this protein is Imidazolonepropionase.